A 90-amino-acid chain; its full sequence is Cluster 41 protein AFLA_114800 (90 aa).

The chain crosses the membrane as a helical span at residues Gly55–Val77. Asn80 is a glycosylation site (N-linked (GlcNAc...) asparagine).

Its subcellular location is the membrane. Cluster 41 protein; part of the gene cluster 41 that mediates the biosynthesis of an extracellular and diffusible metabolite that is able to stimulate colony sclerotial production. This Aspergillus flavus (strain ATCC 200026 / FGSC A1120 / IAM 13836 / NRRL 3357 / JCM 12722 / SRRC 167) protein is Cluster 41 protein AFLA_114800.